The chain runs to 53 residues: Neuronal protein NP-190 (53 aa).

As to expression, mainly expressed in the fetal brain where it is specifically localized to the proximal axonal segments, cell bodies and growth cones. Lower level of expression was also detected in the fetal heart and the skeletal muscle. No expression in kidney, liver, lung or spleen.

It is found in the membrane. Neuronal antigen that may play a role in brain development. May be involved in neurite formation or axonal guidance. The sequence is that of Neuronal protein NP-190 from Sus scrofa (Pig).